Reading from the N-terminus, the 594-residue chain is Spermidine/putrescine import ATP-binding protein PotA (594 aa).

An ABC transporter domain is found at 24–435; the sequence is IEIKKINKTY…PANNWVANFI (412 aa). Residue 57-64 participates in ATP binding; it reads GPSGCGKT. Residues 125-304 form an insert region; it reads RKPIENVSAD…EWFDKKKLTR (180 aa).

It belongs to the ABC transporter superfamily. Spermidine/putrescine importer (TC 3.A.1.11.1) family. The complex is composed of two ATP-binding proteins (PotA), two transmembrane proteins (PotB and PotC) and a solute-binding protein (PotD).

It is found in the cell membrane. The enzyme catalyses ATP + H2O + polyamine-[polyamine-binding protein]Side 1 = ADP + phosphate + polyamineSide 2 + [polyamine-binding protein]Side 1.. Its function is as follows. Part of the ABC transporter complex PotABCD involved in spermidine/putrescine import. Responsible for energy coupling to the transport system. The polypeptide is Spermidine/putrescine import ATP-binding protein PotA (Malacoplasma penetrans (strain HF-2) (Mycoplasma penetrans)).